A 412-amino-acid polypeptide reads, in one-letter code: Alpha-1-antiproteinase (412 aa).

The N-terminal stretch at 1 to 24 (MTPSISWGLLLLAGLFCLVPSFLA) is a signal peptide. The residue at position 33 (S33) is a Phosphoserine. N-linked (GlcNAc...) asparagine glycans are attached at residues N100, N133, N264, and N313. Positions 367-386 (AATVLQAVPMSMPPILNFNK) are RCL. At S377 the chain carries Phosphoserine.

The protein belongs to the serpin family. As to quaternary structure, interacts with CELA2A. Interacts with ERGIC3 and LMAN1/ERGIC53. Interacts with PRSS1/Trypsin. In terms of tissue distribution, expressed not only in liver but also in kidney tubule cells, where it is regulated by androgens during development.

It is found in the secreted. Functionally, inhibitor of serine proteases. Its primary target is elastase, but it also has a moderate affinity for plasmin and thrombin. This Mus caroli (Ryukyu mouse) protein is Alpha-1-antiproteinase (Serpina1).